Consider the following 194-residue polypeptide: Small ribosomal subunit protein uS4c (194 aa).

One can recognise an S4 RNA-binding domain in the interval 82-143 (MRLDNILFRL…KQRSKALIQD (62 aa)).

The protein belongs to the universal ribosomal protein uS4 family. In terms of assembly, part of the 30S ribosomal subunit. Contacts protein S5. The interaction surface between S4 and S5 is involved in control of translational fidelity.

The protein localises to the plastid. The protein resides in the chloroplast. In terms of biological role, one of the primary rRNA binding proteins, it binds directly to 16S rRNA where it nucleates assembly of the body of the 30S subunit. Functionally, with S5 and S12 plays an important role in translational accuracy. This is Small ribosomal subunit protein uS4c (rps4) from Bobartia gladiata (Sword rush-lily).